The following is a 154-amino-acid chain: D-aminoacyl-tRNA deacylase (154 aa).

The Gly-cisPro motif, important for rejection of L-amino acids signature appears at G142–P143.

It belongs to the DTD family. As to quaternary structure, homodimer.

Its subcellular location is the cytoplasm. The enzyme catalyses glycyl-tRNA(Ala) + H2O = tRNA(Ala) + glycine + H(+). The catalysed reaction is a D-aminoacyl-tRNA + H2O = a tRNA + a D-alpha-amino acid + H(+). In terms of biological role, an aminoacyl-tRNA editing enzyme that deacylates mischarged D-aminoacyl-tRNAs. Also deacylates mischarged glycyl-tRNA(Ala), protecting cells against glycine mischarging by AlaRS. Acts via tRNA-based rather than protein-based catalysis; rejects L-amino acids rather than detecting D-amino acids in the active site. By recycling D-aminoacyl-tRNA to D-amino acids and free tRNA molecules, this enzyme counteracts the toxicity associated with the formation of D-aminoacyl-tRNA entities in vivo and helps enforce protein L-homochirality. The sequence is that of D-aminoacyl-tRNA deacylase (DTD1) from Yarrowia lipolytica (strain CLIB 122 / E 150) (Yeast).